Here is a 142-residue protein sequence, read N- to C-terminus: ATP synthase F(0) complex subunit C3, mitochondrial (142 aa).

Residues methionine 1–arginine 67 constitute a mitochondrion transit peptide. A helical transmembrane segment spans residues valine 83–tyrosine 103. The residue at position 110 (lysine 110) is an N6,N6,N6-trimethyllysine. Residues isoleucine 118–isoleucine 138 traverse the membrane as a helical segment.

Belongs to the ATPase C chain family. F-type ATPases have 2 components, CF(1) - the catalytic core - and CF(0) - the membrane proton channel. CF(1) has five subunits: alpha(3), beta(3), gamma(1), delta(1), epsilon(1). CF(0) has three main subunits: a, b and c. Interacts with TMEM70 and TMEM242. Trimethylated by ATPSCKMT at Lys-110. Methylation is required for proper incorporation of the C subunit into the ATP synthase complex and mitochondrial respiration.

The protein localises to the mitochondrion membrane. Functionally, mitochondrial membrane ATP synthase (F(1)F(0) ATP synthase or Complex V) produces ATP from ADP in the presence of a proton gradient across the membrane which is generated by electron transport complexes of the respiratory chain. F-type ATPases consist of two structural domains, F(1) - containing the extramembraneous catalytic core and F(0) - containing the membrane proton channel, linked together by a central stalk and a peripheral stalk. During catalysis, ATP synthesis in the catalytic domain of F(1) is coupled via a rotary mechanism of the central stalk subunits to proton translocation. Part of the complex F(0) domain. A homomeric c-ring of probably 10 subunits is part of the complex rotary element. This Pongo abelii (Sumatran orangutan) protein is ATP synthase F(0) complex subunit C3, mitochondrial.